A 337-amino-acid chain; its full sequence is Viral cathepsin (337 aa).

The N-terminal stretch at 1 to 18 (MYLIYYYTIIAVATASIA) is a signal peptide. Positions 19-126 (NEKIFYDIDS…VTVAGPSART (108 aa)) are cleaved as a propeptide — activation peptide. Cystine bridges form between Cys-147–Cys-188, Cys-181–Cys-221, and Cys-276–Cys-324. Residue Cys-150 is part of the active site. Catalysis depends on residues His-283 and Asn-303.

This sequence belongs to the peptidase C1 family. Synthesized as an inactive proenzyme and activated by proteolytic removal of the inhibitory propeptide.

It catalyses the reaction Endopeptidase of broad specificity, hydrolyzing substrates of both cathepsin L and cathepsin B.. Cysteine protease that plays an essential role in host liquefaction to facilitate horizontal transmission of the virus. May participate in the degradation of foreign protein expressed by the baculovirus system. This chain is Viral cathepsin (VCATH), found in Spodoptera litura multicapsid nucleopolyhedrovirus (SpltMNPV).